The chain runs to 642 residues: Extracellular metalloproteinase 5 (642 aa).

The N-terminal stretch at 1–19 (MHGLLLAAGLLSLPLHVLA) is a signal peptide. Residues 20–246 (HPQPSTTTSL…VHNVVDYVAH (227 aa)) constitute a propeptide that is removed on maturation. N287 carries an N-linked (GlcNAc...) asparagine glycan. H430 is a binding site for Zn(2+). E431 is an active-site residue. H434 serves as a coordination point for Zn(2+). N-linked (GlcNAc...) asparagine glycans are attached at residues N595 and N624.

Belongs to the peptidase M36 family. Zn(2+) is required as a cofactor.

It is found in the secreted. In terms of biological role, secreted metalloproteinase that allows assimilation of proteinaceous substrates and probably acts as a virulence factor. This chain is Extracellular metalloproteinase 5 (MEP5), found in Arthroderma gypseum (strain ATCC MYA-4604 / CBS 118893) (Microsporum gypseum).